Reading from the N-terminus, the 272-residue chain is Shikimate dehydrogenase (NADP(+)) (272 aa).

Shikimate-binding positions include 14 to 16 (SKS) and threonine 61. Catalysis depends on lysine 65, which acts as the Proton acceptor. An NADP(+)-binding site is contributed by glutamate 77. 2 residues coordinate shikimate: asparagine 86 and aspartate 102. NADP(+) contacts are provided by residues 126 to 130 (GAGGA), 149 to 154 (NRTFSR), and methionine 213. Shikimate is bound at residue tyrosine 215. Glycine 237 contributes to the NADP(+) binding site.

This sequence belongs to the shikimate dehydrogenase family. Homodimer.

It catalyses the reaction shikimate + NADP(+) = 3-dehydroshikimate + NADPH + H(+). The protein operates within metabolic intermediate biosynthesis; chorismate biosynthesis; chorismate from D-erythrose 4-phosphate and phosphoenolpyruvate: step 4/7. In terms of biological role, involved in the biosynthesis of the chorismate, which leads to the biosynthesis of aromatic amino acids. Catalyzes the reversible NADPH linked reduction of 3-dehydroshikimate (DHSA) to yield shikimate (SA). In Photorhabdus laumondii subsp. laumondii (strain DSM 15139 / CIP 105565 / TT01) (Photorhabdus luminescens subsp. laumondii), this protein is Shikimate dehydrogenase (NADP(+)).